The chain runs to 313 residues: Porphobilinogen deaminase (313 aa).

At cysteine 242 the chain carries S-(dipyrrolylmethanemethyl)cysteine.

The protein belongs to the HMBS family. Monomer. Requires dipyrromethane as cofactor.

It carries out the reaction 4 porphobilinogen + H2O = hydroxymethylbilane + 4 NH4(+). It functions in the pathway porphyrin-containing compound metabolism; protoporphyrin-IX biosynthesis; coproporphyrinogen-III from 5-aminolevulinate: step 2/4. Tetrapolymerization of the monopyrrole PBG into the hydroxymethylbilane pre-uroporphyrinogen in several discrete steps. The polypeptide is Porphobilinogen deaminase (Pseudomonas aeruginosa (strain UCBPP-PA14)).